Consider the following 66-residue polypeptide: DNA-directed RNA polymerase subunit Rpo10 (66 aa).

Zn(2+)-binding residues include Cys-7, Cys-10, Cys-44, and Cys-45.

Belongs to the archaeal Rpo10/eukaryotic RPB10 RNA polymerase subunit family. In terms of assembly, part of the RNA polymerase complex. The cofactor is Zn(2+).

The protein resides in the cytoplasm. The catalysed reaction is RNA(n) + a ribonucleoside 5'-triphosphate = RNA(n+1) + diphosphate. In terms of biological role, DNA-dependent RNA polymerase (RNAP) catalyzes the transcription of DNA into RNA using the four ribonucleoside triphosphates as substrates. The protein is DNA-directed RNA polymerase subunit Rpo10 of Sulfurisphaera tokodaii (strain DSM 16993 / JCM 10545 / NBRC 100140 / 7) (Sulfolobus tokodaii).